The following is a 279-amino-acid chain: 4-deoxy-L-threo-5-hexosulose-uronate ketol-isomerase (279 aa).

Zn(2+)-binding residues include H197, H199, E204, and H246.

This sequence belongs to the KduI family. Zn(2+) serves as cofactor.

It carries out the reaction 5-dehydro-4-deoxy-D-glucuronate = 3-deoxy-D-glycero-2,5-hexodiulosonate. It functions in the pathway glycan metabolism; pectin degradation; 2-dehydro-3-deoxy-D-gluconate from pectin: step 4/5. In terms of biological role, catalyzes the isomerization of 5-dehydro-4-deoxy-D-glucuronate to 3-deoxy-D-glycero-2,5-hexodiulosonate. This Kineococcus radiotolerans (strain ATCC BAA-149 / DSM 14245 / SRS30216) protein is 4-deoxy-L-threo-5-hexosulose-uronate ketol-isomerase.